The primary structure comprises 278 residues: Formamidopyrimidine-DNA glycosylase (278 aa).

The active-site Schiff-base intermediate with DNA is the proline 2. The Proton donor role is filled by glutamate 3. Lysine 59 serves as the catalytic Proton donor; for beta-elimination activity. Positions 93, 112, and 153 each coordinate DNA. The FPG-type zinc finger occupies 238-272 (NVYDRAGEPCPRCQSTIERIVVAQRSTYFCPTCQI). The active-site Proton donor; for delta-elimination activity is arginine 262.

This sequence belongs to the FPG family. As to quaternary structure, monomer. The cofactor is Zn(2+).

It carries out the reaction Hydrolysis of DNA containing ring-opened 7-methylguanine residues, releasing 2,6-diamino-4-hydroxy-5-(N-methyl)formamidopyrimidine.. The catalysed reaction is 2'-deoxyribonucleotide-(2'-deoxyribose 5'-phosphate)-2'-deoxyribonucleotide-DNA = a 3'-end 2'-deoxyribonucleotide-(2,3-dehydro-2,3-deoxyribose 5'-phosphate)-DNA + a 5'-end 5'-phospho-2'-deoxyribonucleoside-DNA + H(+). Its function is as follows. Involved in base excision repair of DNA damaged by oxidation or by mutagenic agents. Acts as a DNA glycosylase that recognizes and removes damaged bases. Has a preference for oxidized purines, such as 7,8-dihydro-8-oxoguanine (8-oxoG). Has AP (apurinic/apyrimidinic) lyase activity and introduces nicks in the DNA strand. Cleaves the DNA backbone by beta-delta elimination to generate a single-strand break at the site of the removed base with both 3'- and 5'-phosphates. This is Formamidopyrimidine-DNA glycosylase from Chloroflexus aurantiacus (strain ATCC 29366 / DSM 635 / J-10-fl).